Consider the following 213-residue polypeptide: Ras-related protein Rab-39B (213 aa).

Residues serine 17, glycine 20, lysine 21, serine 22, cysteine 23, serine 37, and threonine 40 each coordinate GTP. Serine 22 contributes to the Mg(2+) binding site. A switch-I region spans residues 35-43 (QVSDPTVGV). The Mg(2+) site is built by threonine 40 and aspartate 64. Residues glycine 67, histidine 123, lysine 124, aspartate 126, alanine 154, and arginine 155 each contribute to the GTP site. The switch-II stretch occupies residues 67–83 (GQERFRSITRAYYRNSV). At serine 201 the chain carries Phosphoserine. S-geranylgeranyl cysteine attachment occurs at residues cysteine 211 and cysteine 213. Cysteine 213 is subject to Cysteine methyl ester.

It belongs to the small GTPase superfamily. Rab family. As to quaternary structure, interacts (GDP-bound) with C9orf72; C9orf72 in complex with SMCR8 acts as a GEF for RAB39B. Interacts (in GTP-bound form) with PICK1 (via PDZ domain); a PICK1 homodimer may allow simultaneous association of RAB39B and GRIA2 to PICK1 which is involved in GRIA2 trafficking. Interacts with isoform c of RASSF1; the interaction is strong. Interacts with isoform a of RASSF1; the interaction is weak. Interacts with the DLG4/PSD-95. Interacts (GTP-bound) with HOPS complex components VPS39 and VPS41. Requires Mg(2+) as cofactor. Highly expressed in the brain.

Its subcellular location is the cell membrane. It localises to the cytoplasmic vesicle membrane. The protein localises to the golgi apparatus. The protein resides in the cytoplasmic vesicle. It is found in the autophagosome membrane. Its subcellular location is the autolysosome membrane. It catalyses the reaction GTP + H2O = GDP + phosphate + H(+). With respect to regulation, regulated by guanine nucleotide exchange factors (GEFs) including C9orf72-SMCR8 complex, which promote the exchange of bound GDP for free GTP. Regulated by GTPase activating proteins (GAPs) which increase the GTP hydrolysis activity. Inhibited by GDP dissociation inhibitors (GDIs). In terms of biological role, the small GTPases Rab are key regulators of intracellular membrane trafficking, from the formation of transport vesicles to their fusion with membranes. Rabs cycle between an inactive GDP-bound form and an active GTP-bound form that is able to recruit to membranes different sets of downstream effectors directly responsible for vesicle formation, movement, tethering and fusion. RAB39B is involved in autophagy and may function in autophagosome formation. Binds downstream effector PICK1 to ensure selectively GRIA2 exit from the endoplasmic reticulum to the Golgi and to regulate AMPAR composition at the post-synapses and thus synaptic transmission. May regulate the homeostasis of SNCA/alpha-synuclein. The polypeptide is Ras-related protein Rab-39B (Homo sapiens (Human)).